We begin with the raw amino-acid sequence, 269 residues long: Fructose-2,6-bisphosphatase TIGAR (269 aa).

H11 functions as the Tele-phosphohistidine intermediate in the catalytic mechanism. E89 serves as the catalytic Proton donor/acceptor.

This sequence belongs to the phosphoglycerate mutase family. As to quaternary structure, interacts with HK2; the interaction increases hexokinase HK2 activity in a hypoxia- and HIF1A-dependent manner, resulting in the regulation of mitochondrial membrane potential, thus increasing NADPH production and decreasing intracellular ROS levels. In terms of tissue distribution, expressed in olfactory bulb, cerebellum, and cortex. Expressed in neurons and astrocytes (at protein level). Expressed in intestinal crypt.

The protein resides in the cytoplasm. It localises to the nucleus. It is found in the mitochondrion. The catalysed reaction is beta-D-fructose 2,6-bisphosphate + H2O = beta-D-fructose 6-phosphate + phosphate. Its function is as follows. Fructose-bisphosphatase hydrolyzing fructose-2,6-bisphosphate as well as fructose-1,6-bisphosphate. Acts as a negative regulator of glycolysis by lowering intracellular levels of fructose-2,6-bisphosphate in a p53/TP53-dependent manner, resulting in the pentose phosphate pathway (PPP) activation and NADPH production. Contributes to the generation of reduced glutathione to cause a decrease in intracellular reactive oxygen species (ROS) content, correlating with its ability to protect cells from oxidative or metabolic stress-induced cell death. Plays a role in promoting protection against cell death during hypoxia by decreasing mitochondria ROS levels in a HK2-dependent manner through a mechanism that is independent of its fructose-bisphosphatase activity. In response to cardiac damage stress, mediates p53-induced inhibition of myocyte mitophagy through ROS levels reduction and the subsequent inactivation of BNIP3. Reduced mitophagy results in an enhanced apoptotic myocyte cell death, and exacerbates cardiac damage. Plays a role in adult intestinal regeneration; contributes to the growth, proliferation and survival of intestinal crypts following tissue ablation. Plays a neuroprotective role against ischemic brain damage by enhancing PPP flux and preserving mitochondria functions. Protects glioma cells from hypoxia- and ROS-induced cell death by inhibiting glycolysis and activating mitochondrial energy metabolism and oxygen consumption in a TKTL1-dependent and p53/TP53-independent manner. Plays a role in cancer cell survival by promoting DNA repair through activating PPP flux in a CDK5-ATM-dependent signaling pathway during hypoxia and/or genome stress-induced DNA damage responses. Involved in intestinal tumor progression. The sequence is that of Fructose-2,6-bisphosphatase TIGAR from Mus musculus (Mouse).